A 156-amino-acid chain; its full sequence is Small ribosomal subunit protein uS7 (156 aa).

This sequence belongs to the universal ribosomal protein uS7 family. In terms of assembly, part of the 30S ribosomal subunit. Contacts proteins S9 and S11.

Its function is as follows. One of the primary rRNA binding proteins, it binds directly to 16S rRNA where it nucleates assembly of the head domain of the 30S subunit. Is located at the subunit interface close to the decoding center, probably blocks exit of the E-site tRNA. The chain is Small ribosomal subunit protein uS7 from Methylocella silvestris (strain DSM 15510 / CIP 108128 / LMG 27833 / NCIMB 13906 / BL2).